Reading from the N-terminus, the 657-residue chain is uncharacterized protein (657 aa).

Catalysis depends on charge relay system residues serine 518 and histidine 631.

This sequence belongs to the peptidase S9C family.

This is an uncharacterized protein from Bacillus subtilis (strain 168).